The primary structure comprises 221 residues: Epididymal secretory glutathione peroxidase (221 aa).

The first 21 residues, 1 to 21 (MTAWLGASYVLPILLVSFVQT), serve as a signal peptide directing secretion. Cys73 is a catalytic residue.

The protein belongs to the glutathione peroxidase family. As to expression, epididymis.

The protein localises to the secreted. It carries out the reaction 2 glutathione + H2O2 = glutathione disulfide + 2 H2O. In terms of biological role, protects cells and enzymes from oxidative damage, by catalyzing the reduction of hydrogen peroxide, lipid peroxides and organic hydroperoxide, by glutathione. May constitute a glutathione peroxidase-like protective system against peroxide damage in sperm membrane lipids. This chain is Epididymal secretory glutathione peroxidase (GPX5), found in Canis lupus familiaris (Dog).